The primary structure comprises 449 residues: Myb-related protein Pp1 (449 aa).

The 30-residue stretch at 1–30 (LGNRWSAIAIPRRTDNEIKNYWNTHLKKRL) folds into the HTH myb-type domain. The segment at residues 5 to 26 (WSAIAIPRRTDNEIKNYWNTHL) is a DNA-binding region (H-T-H motif).

It is found in the nucleus. Possible transcription activator. The chain is Myb-related protein Pp1 (PP1) from Physcomitrium patens (Spreading-leaved earth moss).